The following is a 260-amino-acid chain: Carbonic anhydrase 2 (260 aa).

Position 2 is an N-acetylserine (Ser-2). Ser-2 carries the post-translational modification Phosphoserine. Residues 3–259 (HHWGYSKHNG…LKNRKIKASF (257 aa)) enclose the Alpha-carbonic anhydrase domain. His-64 functions as the Proton acceptor in the catalytic mechanism. The active site involves Asn-67. At Ser-87 the chain carries Phosphoserine. His-94, His-96, and His-119 together coordinate Zn(2+). Residue Tyr-127 is part of the active site. A Phosphoserine modification is found at Ser-165. 198-199 (TT) contributes to the substrate binding site.

It belongs to the alpha-carbonic anhydrase family. In terms of assembly, interacts with SLC4A4. Interaction with SLC4A7 regulates SLC4A7 transporter activity. Interacts with SLC26A6. The cofactor is Zn(2+).

Its subcellular location is the cytoplasm. The protein resides in the cell membrane. The enzyme catalyses hydrogencarbonate + H(+) = CO2 + H2O. The catalysed reaction is urea = cyanamide + H2O. With respect to regulation, inhibited by acetazolamide. Functionally, catalyzes the reversible hydration of carbon dioxide. Can also hydrate cyanamide to urea. Involved in the regulation of fluid secretion into the anterior chamber of the eye. Essential for bone resorption and osteoclast differentiation. Contributes to intracellular pH regulation in the duodenal upper villous epithelium during proton-coupled peptide absorption. Stimulates the chloride-bicarbonate exchange activity of SLC26A6. The sequence is that of Carbonic anhydrase 2 (Ca2) from Mus musculus (Mouse).